The following is a 138-amino-acid chain: Acidic phospholipase A2 CoaPLA2 (138 aa).

Residues 1–16 (MRTLWIVAVLLLGVEG) form the signal peptide. Cystine bridges form between Cys42–Cys131, Cys44–Cys60, Cys59–Cys111, Cys65–Cys138, Cys66–Cys104, Cys73–Cys97, and Cys91–Cys102. 3 residues coordinate Ca(2+): Tyr43, Gly45, and Gly47. The active site involves His63. Residue Asp64 participates in Ca(2+) binding. Asp105 is an active-site residue.

Belongs to the phospholipase A2 family. Group II subfamily. D49 sub-subfamily. In terms of assembly, homodimer. The cofactor is Ca(2+). Expressed by the venom gland.

The protein resides in the secreted. The catalysed reaction is a 1,2-diacyl-sn-glycero-3-phosphocholine + H2O = a 1-acyl-sn-glycero-3-phosphocholine + a fatty acid + H(+). Its function is as follows. Snake venom phospholipase A2 (PLA2) that shows very low inhibition of ADP-induced platelet aggregation in platelet-rich plasma of human, rabbit and guinea pig. Shows edema-inducing activity and myotoxicity. PLA2 catalyzes the calcium-dependent hydrolysis of the 2-acyl groups in 3-sn-phosphoglycerides. This chain is Acidic phospholipase A2 CoaPLA2, found in Crotalus lutosus abyssus (Grand Canyon rattlesnake).